The following is a 794-amino-acid chain: Signal transducer and activator of transcription 5A (794 aa).

Position 90 is a phosphotyrosine (Y90). Position 129 is a phosphoserine (S129). The SH2 domain maps to 589–686 (WNDGAILGFV…EVFSKYYTPV (98 aa)). At Y682 the chain carries Phosphotyrosine. Y694 carries the post-translational modification Phosphotyrosine; by JAK2. Positions 765-794 (EELLRRPNGQSGPLSPPPAGLFTPARGSLS) are disordered.

This sequence belongs to the transcription factor STAT family. In terms of assembly, forms a homodimer or a heterodimer with a related family member. Binds NR3C1. Interacts with NCOA1 and SOCS7. Interacts with ERBB4. Interacts with EBF4. Interacts with CD69. ISGylated. In terms of processing, tyrosine phosphorylated in response to KITLG/SCF, IL2, IL3, IL7, IL15, CSF2/GMCSF, GH1, PRL, EPO and THPO. Activated KIT promotes phosphorylation on tyrosine residues and subsequent translocation to the nucleus. Tyrosine phosphorylated in response to constitutively activated FGFR1, FGFR2, FGFR3 and FGFR4. Tyrosine phosphorylation is required for DNA-binding activity and dimerization. Serine phosphorylation is also required for maximal transcriptional activity. Tyrosine phosphorylated in response to signaling via activated FLT3; wild-type FLT3 results in much weaker phosphorylation than constitutively activated mutant FLT3. Alternatively, can be phosphorylated by JAK2 at Tyr-694. In terms of tissue distribution, found in mammary gland and, in lesser extent, in ovary, thymus, spleen, kidney, lung, muscle and adrenal gland.

Its subcellular location is the cytoplasm. It localises to the nucleus. Carries out a dual function: signal transduction and activation of transcription. Mediates cellular responses to the cytokine KITLG/SCF and other growth factors. May mediate cellular responses to activated FGFR1, FGFR2, FGFR3 and FGFR4. Binds to the GAS element and activates PRL-induced transcription. Regulates the expression of milk proteins during lactation. The chain is Signal transducer and activator of transcription 5A (STAT5A) from Ovis aries (Sheep).